A 554-amino-acid chain; its full sequence is Macrophage colony-stimulating factor 1 (554 aa).

A signal peptide spans M1–T32. The Lumenal segment spans residues E33–S496. 3 cysteine pairs are disulfide-bonded: C39–C122, C80–C171, and C134–C178. N154 and N172 each carry an N-linked (GlcNAc...) asparagine glycan. A disordered region spans residues E224–S488. T266 is modified (phosphothreonine; by FAM20C). An O-linked (Xyl...) (chondroitin sulfate) serine glycan is attached at S309. Residues L344 to A354 are compositionally biased toward low complexity. O-linked (GalNAc...) threonine glycans are attached at residues T363 and T365. Residues R404 to S433 are compositionally biased toward polar residues. Residues S406–S426 are O-glycosylated at one site. The segment covering L440–A453 has biased composition (basic and acidic residues). The chain crosses the membrane as a helical span at residues V497 to F517. The Cytoplasmic portion of the chain corresponds to Y518 to V554. The interval Q526 to V554 is disordered. The segment covering Q545–V554 has biased composition (basic and acidic residues).

Homodimer or heterodimer; disulfide-linked. Likely to exist in multiple forms: homodimer consisting of 2 identical 150-200 kDa proteoglycan subunits, heterodimer consisting of a 150-200 kDa proteoglycan subunit and a truncated 43 kDa subunit, and homodimer consisting of 2 identical 43 kDa subunits. Interacts with CSF1R. In terms of processing, N-glycosylated. O-glycosylated; contains chondroitin sulfate. O-glycosylated with core 1 or possibly core 8 glycans. Post-translationally, O-glycosylated.

The protein resides in the cell membrane. It is found in the secreted. It localises to the extracellular space. Functionally, cytokine that plays an essential role in the regulation of survival, proliferation and differentiation of hematopoietic precursor cells, especially mononuclear phagocytes, such as macrophages and monocytes. Promotes the release of pro-inflammatory chemokines, and thereby plays an important role in innate immunity and in inflammatory processes. Plays an important role in the regulation of osteoclast proliferation and differentiation, the regulation of bone resorption, and is required for normal bone development. Required for normal male and female fertility. Promotes reorganization of the actin cytoskeleton, regulates formation of membrane ruffles, cell adhesion and cell migration. Plays a role in lipoprotein clearance. This Homo sapiens (Human) protein is Macrophage colony-stimulating factor 1 (CSF1).